A 76-amino-acid polypeptide reads, in one-letter code: Conotoxin Cal5a L3 (76 aa).

Residues 1–22 form the signal peptide; that stretch reads MRFYIGLMAALMLTSVLRTDSA. Positions 23 to 42 are excised as a propeptide; sequence SVGQTGTKSELAVIERVIRQ. 4-hydroxyproline is present on P50. 4-hydroxyproline; partial is present on residues P58, P62, and P64.

Belongs to the conotoxin T superfamily. In terms of processing, contains 2 disulfide bonds that can be either 'C1-C3, C2-C4' or 'C1-C4, C2-C3', since these disulfide connectivities have been observed for conotoxins with cysteine framework V (for examples, see AC P0DQQ7 and AC P81755). Expressed by the venom duct.

It is found in the secreted. Probable neurotoxin with unknown target. Possibly targets ion channels. The chain is Conotoxin Cal5a L3 from Californiconus californicus (California cone).